The following is a 466-amino-acid chain: 3-isopropylmalate dehydratase large subunit (466 aa).

Residues C347, C407, and C410 each contribute to the [4Fe-4S] cluster site.

The protein belongs to the aconitase/IPM isomerase family. LeuC type 1 subfamily. In terms of assembly, heterodimer of LeuC and LeuD. Requires [4Fe-4S] cluster as cofactor.

The enzyme catalyses (2R,3S)-3-isopropylmalate = (2S)-2-isopropylmalate. It participates in amino-acid biosynthesis; L-leucine biosynthesis; L-leucine from 3-methyl-2-oxobutanoate: step 2/4. In terms of biological role, catalyzes the isomerization between 2-isopropylmalate and 3-isopropylmalate, via the formation of 2-isopropylmaleate. The sequence is that of 3-isopropylmalate dehydratase large subunit from Klebsiella pneumoniae (strain 342).